The primary structure comprises 385 residues: S-adenosylmethionine synthase (385 aa).

His16 lines the ATP pocket. Asp18 provides a ligand contact to Mg(2+). Glu44 contributes to the K(+) binding site. Glu57 and Gln100 together coordinate L-methionine. A flexible loop region spans residues 100–110 (QSPDINQGVDR). ATP contacts are provided by residues 164 to 166 (DGK), 230 to 231 (KF), Asp239, 245 to 246 (RK), Ala262, and Lys266. Asp239 serves as a coordination point for L-methionine. Lys270 provides a ligand contact to L-methionine.

Belongs to the AdoMet synthase family. In terms of assembly, homotetramer; dimer of dimers. The cofactor is Mg(2+). It depends on K(+) as a cofactor.

Its subcellular location is the cytoplasm. The catalysed reaction is L-methionine + ATP + H2O = S-adenosyl-L-methionine + phosphate + diphosphate. Its pathway is amino-acid biosynthesis; S-adenosyl-L-methionine biosynthesis; S-adenosyl-L-methionine from L-methionine: step 1/1. Its function is as follows. Catalyzes the formation of S-adenosylmethionine (AdoMet) from methionine and ATP. The overall synthetic reaction is composed of two sequential steps, AdoMet formation and the subsequent tripolyphosphate hydrolysis which occurs prior to release of AdoMet from the enzyme. The sequence is that of S-adenosylmethionine synthase from Helicobacter pylori (strain Shi470).